We begin with the raw amino-acid sequence, 561 residues long: Putative transport protein YbjL (561 aa).

5 consecutive transmembrane segments (helical) span residues 8 to 28 (LLNG…LCLG), 32 to 52 (LGSI…LLGQ), 66 to 86 (FMLF…SIFF), 94 to 114 (MLAL…GKLF), and 158 to 178 (NLSL…IVGA). 2 consecutive RCK C-terminal domains span residues 200 to 288 (RGLD…SFRN) and 292 to 373 (VFDR…RIGF). Helical transmembrane passes span 383–403 (LLAF…TFQF), 406–426 (FSFG…LGFM), 451–471 (VFMA…LGAI), 475–495 (MLIA…LFGA), and 540–560 (AIAN…WPGL).

It belongs to the AAE transporter (TC 2.A.81) family. YbjL subfamily.

Its subcellular location is the cell membrane. In Shigella boydii serotype 4 (strain Sb227), this protein is Putative transport protein YbjL.